The chain runs to 557 residues: 2-isopropylmalate synthase (557 aa).

The 275-residue stretch at 33–307 (PIWCSSDLRD…DPQLDFSDID (275 aa)) folds into the Pyruvate carboxyltransferase domain. The Mg(2+) site is built by Asp-42, His-246, His-248, and Asn-282. Positions 439–557 (ANSPYALVSH…SLSQQEAKAA (119 aa)) are regulatory domain.

This sequence belongs to the alpha-IPM synthase/homocitrate synthase family. LeuA type 2 subfamily. In terms of assembly, homodimer. The cofactor is Mg(2+).

It localises to the cytoplasm. It catalyses the reaction 3-methyl-2-oxobutanoate + acetyl-CoA + H2O = (2S)-2-isopropylmalate + CoA + H(+). It participates in amino-acid biosynthesis; L-leucine biosynthesis; L-leucine from 3-methyl-2-oxobutanoate: step 1/4. In terms of biological role, catalyzes the condensation of the acetyl group of acetyl-CoA with 3-methyl-2-oxobutanoate (2-ketoisovalerate) to form 3-carboxy-3-hydroxy-4-methylpentanoate (2-isopropylmalate). This Pseudomonas putida (strain W619) protein is 2-isopropylmalate synthase.